The primary structure comprises 443 residues: Trigger factor (443 aa).

A PPIase FKBP-type domain is found at 169 to 254 (GDIAFLDFSG…LNSIKEVQLP (86 aa)).

Belongs to the FKBP-type PPIase family. Tig subfamily.

The protein localises to the cytoplasm. It catalyses the reaction [protein]-peptidylproline (omega=180) = [protein]-peptidylproline (omega=0). Its function is as follows. Involved in protein export. Acts as a chaperone by maintaining the newly synthesized protein in an open conformation. Functions as a peptidyl-prolyl cis-trans isomerase. The chain is Trigger factor from Mycoplasmoides gallisepticum (strain R(low / passage 15 / clone 2)) (Mycoplasma gallisepticum).